Reading from the N-terminus, the 685-residue chain is Sodium-dependent phosphate transporter 1-A (685 aa).

Helical transmembrane passes span 21-41, 66-86, 106-126, 162-182, 207-227, and 234-254; these read IMAPYLWMLVLGFVIAFVLAF, ACILASIFETVGSVLLGAKVS, LMAGSISAMFGSAVWQLAASF, IVLSWFISPLLSGIMSALLFL, ACTIGINLFSIMFTGAPLLGF, and GIILISVGCAVLCALIVWFVV. Disordered regions lie at residues 438 to 458 and 483 to 513; these read RNRDTEARPDEAEKSTVHGAD and EAEEQEEGSVEDVETDRKSSSSSLEERHDQD. The span at 483-496 shows a compositional bias: acidic residues; it reads EAEEQEEGSVEDVE. Basic and acidic residues predominate over residues 497 to 513; that stretch reads TDRKSSSSSLEERHDQD. A run of 4 helical transmembrane segments spans residues 517–537, 565–585, 606–626, and 656–676; these read VSLLFQFLQILTACFGSFAHG, ATPIWLLLYGGIGICIGLWVW, FSIELASALTVVIASNVGLPI, and IFLAWFVTVPISGLISAGIMA.

The protein belongs to the inorganic phosphate transporter (PiT) (TC 2.A.20) family.

The protein resides in the membrane. Its function is as follows. Sodium-phosphate symporter which plays a fundamental housekeeping role in phosphate transport. The protein is Sodium-dependent phosphate transporter 1-A (slc20a1-a) of Xenopus laevis (African clawed frog).